Here is a 432-residue protein sequence, read N- to C-terminus: MIGGLKSCIEQPSLPKPSTLLPQDKACDTGGKRIFLDVQSTTPVDPRVLDAMLPFYTTVFGNPHSRTHRYGWQAEAAVEKARSQVASLIGCDPKEIIFTSGATESNNLALKGVSGFKLKEGKAAHIITLQTEHKCILDTCRNLEENGVEVTYLPVGNDGVVDIDDVKKSIKENTVLVSIGAVNSEIGTVQPLKEIGMLCKERGVLFHTDAAQGVGKIQIDVNEMNIDLLSMCAHKIYGPKGIGALYVRRRPRVRMVPLINGGGQERGLRSGTVASPLVVGFGKAAEICSKEMKRDFEHIKELSKKLKNMFKKNIEGVIINGSEKGFPGCVNVSFPFVEGESLLMHLKDIALSSGSACTSASLEPSYVLRALGRDDELAHSSIRFGIGRFTMAKEIDIVANKTVEAVQKLREMSPLYEMVKEGIDLSKISWTS.

Pyridoxal 5'-phosphate-binding positions include 102 to 103 (AT), glutamine 212, and 232 to 234 (CAH). Residue lysine 235 is modified to N6-(pyridoxal phosphate)lysine. Threonine 272 contacts pyridoxal 5'-phosphate. The Cysteine persulfide intermediate role is filled by cysteine 357. Cysteine 357 lines the [2Fe-2S] cluster pocket.

The protein belongs to the class-V pyridoxal-phosphate-dependent aminotransferase family. NifS/IscS subfamily. Pyridoxal 5'-phosphate serves as cofactor.

The protein localises to the mitosome. It catalyses the reaction (sulfur carrier)-H + L-cysteine = (sulfur carrier)-SH + L-alanine. Functionally, catalyzes the removal of elemental sulfur from cysteine to produce alanine. It supplies the inorganic sulfur for iron-sulfur (Fe-S) clusters in mitosomes. The chain is Cysteine desulfurase, mitosomal from Encephalitozoon cuniculi (strain GB-M1) (Microsporidian parasite).